Reading from the N-terminus, the 406-residue chain is Serine/threonine transporter SstT (406 aa).

The next 9 membrane-spanning stretches (helical) occupy residues 11–31, 45–65, 79–99, 141–161, 185–205, 216–236, 298–318, 330–350, and 357–377; these read IGLVPLIIVGLVLGILIGWLM, FVGALKAVAPILVFILVMAAI, VLIMYIFGTFLAALTAVVASF, AIANANYMGILAWALIIGLAL, FVIAFAPIGILGLVANTIAET, LLTILVGCMLFIALVVNPIIV, MAGAAITINVLTLAAAHTLGV, VVATVAACGASGVAGGSLLLI, and FNIPNDIAMQVVAIGFIIGVV.

Belongs to the dicarboxylate/amino acid:cation symporter (DAACS) (TC 2.A.23) family.

Its subcellular location is the cell inner membrane. It carries out the reaction L-serine(in) + Na(+)(in) = L-serine(out) + Na(+)(out). It catalyses the reaction L-threonine(in) + Na(+)(in) = L-threonine(out) + Na(+)(out). Its function is as follows. Involved in the import of serine and threonine into the cell, with the concomitant import of sodium (symport system). The sequence is that of Serine/threonine transporter SstT from Psychrobacter sp. (strain PRwf-1).